The following is a 101-amino-acid chain: Omega-scoloptoxin(10)-Ssd1b (101 aa).

The first 23 residues, 1–23 (MNKLTIIFFTILLLTYIIVEKEA), serve as a signal peptide directing secretion.

In terms of processing, contains 3 disulfide bonds. Expressed by the venom gland.

Its subcellular location is the secreted. In terms of biological role, voltage-gated calcium channel inhibitor. The sequence is that of Omega-scoloptoxin(10)-Ssd1b from Scolopendra dehaani (Thai centipede).